The primary structure comprises 460 residues: Retinoic acid receptor alpha (460 aa).

Residues 1 to 87 form a modulating region; that stretch reads MASNSSSCPT…PPPLPRIYKP (87 aa). The tract at residues 46–78 is disordered; it reads HQLPVSGYSTPSPATVETQSTSSEEIVPSPPSP. Over residues 52 to 69 the composition is skewed to polar residues; sequence GYSTPSPATVETQSTSSE. 2 consecutive NR C4-type zinc fingers follow at residues 88-108 and 124-148; these read CFVC…CEGC and CHRD…LQKC. The segment at residues 88 to 153 is a DNA-binding region (nuclear receptor); sequence CFVCQDKSSG…RLQKCFEVGM (66 aa). A hinge region spans residues 154–182; the sequence is SKESVRNDRNKKKKDVPKTECSESYIVTP. The NR LBD domain maps to 183-417; it reads EVEELIEKVR…PLIQEMLENS (235 aa). Residues 408 to 416 carry the 9aaTAD motif; sequence PLIQEMLEN. The segment at 418–460 is disordered; the sequence is EGMDTLGGQPGGPRTGGLGPPPGSCSPSLSPSSTRSSPATHSP. The span at 425-435 shows a compositional bias: gly residues; sequence GQPGGPRTGGL. Positions 442 to 460 are enriched in low complexity; that stretch reads CSPSLSPSSTRSSPATHSP.

The protein belongs to the nuclear hormone receptor family. NR1 subfamily. In terms of assembly, heterodimer; with an RXR molecule. Binds DNA preferentially as a RAR/RXR heterodimer. As to expression, ubiquitous.

It localises to the nucleus. In terms of biological role, receptor for retinoic acid. Retinoic acid receptors bind as heterodimers to their target response elements in response to their ligands, all-trans or 9-cis retinoic acid, and regulate gene expression in various biological processes. The RAR/RXR heterodimers bind to the retinoic acid response elements (RARE) composed of tandem 5'-AGGTCA-3' sites known as DR1-DR5. Required for hindbrain patterning and appears to be required for skin development. This is Retinoic acid receptor alpha (RARA) from Gallus gallus (Chicken).